Consider the following 189-residue polypeptide: Testis-expressed protein 22 (189 aa).

The segment at 1-120 (MDSRQQRPQR…TQSVPTPPLQ (120 aa)) is disordered. Residues 14–24 (QWQLAQEQRQQ) show a composition bias toward low complexity. Basic and acidic residues predominate over residues 70–87 (IDERRRLALQRMQERTDT). The segment covering 103 to 114 (QQTETSPSTQSV) has biased composition (low complexity).

In terms of tissue distribution, mainly expressed in spermatocytes and spermatids in testis.

The protein resides in the cytoplasm. It is found in the cytoplasmic vesicle. The protein localises to the secretory vesicle. Its subcellular location is the acrosome. This is Testis-expressed protein 22 (Tex22) from Mus musculus (Mouse).